A 107-amino-acid chain; its full sequence is Putative double-stranded DNA mimic protein HSM_1473 (107 aa).

This sequence belongs to the putative dsDNA mimic protein family.

Functionally, may act as a double-stranded DNA (dsDNA) mimic. Probably regulates the activity of a dsDNA-binding protein. The polypeptide is Putative double-stranded DNA mimic protein HSM_1473 (Histophilus somni (strain 2336) (Haemophilus somnus)).